Consider the following 981-residue polypeptide: Ephrin type-A receptor 3 (981 aa).

A signal peptide spans 1-20 (MALFRIYSFLAPFHILVLCQ). Over 21-545 (ALRNYPDNEV…LAVGDPNQQT (525 aa)) the chain is Extracellular. An Eph LBD domain is found at 29–210 (EVTLLDSMSA…FYKRCPLAVL (182 aa)). Fibronectin type-III domains lie at 328-441 (PPSA…TSQT) and 442-533 (VSVI…TSHE). Asn-340, Asn-410, Asn-435, and Asn-485 each carry an N-linked (GlcNAc...) asparagine glycan. The chain crosses the membrane as a helical span at residues 546–566 (ILAISVAGGAVLLVLLVACFI). Residues 567–981 (VSGRRCGYIK…QAHHGTQVQV (415 aa)) lie on the Cytoplasmic side of the membrane. Phosphotyrosine; by autocatalysis occurs at positions 601 and 607. The Protein kinase domain maps to 626–887 (IRIERVIGAG…QIVNTLDRLI (262 aa)). ATP contacts are provided by residues 633–638 (GAGEFG), Lys-658, and 705–711 (EYMENGS). Tyr-706 carries the phosphotyrosine; by autocatalysis modification. Residue Asp-751 is the Proton acceptor of the active site. Residue 755–756 (RN) participates in ATP binding. A phosphotyrosine; by autocatalysis mark is found at Tyr-784 and Tyr-927. The 65-residue stretch at 910 to 974 (AAVNTVEDWL…LSSIQCLQAH (65 aa)) folds into the SAM domain. The PDZ-binding signature appears at 979–981 (VQV).

The protein belongs to the protein kinase superfamily. Tyr protein kinase family. Ephrin receptor subfamily. Heterotetramer upon binding of the ligand. The heterotetramer is composed of an ephrin dimer and a receptor dimer. Oligomerization is probably required to induce biological responses. Post-translationally, autophosphorylates upon activation by efna5. As to expression, widely expressed in the developing zebrafish nervous system.

The protein resides in the cell membrane. It catalyses the reaction L-tyrosyl-[protein] + ATP = O-phospho-L-tyrosyl-[protein] + ADP + H(+). Receptor tyrosine kinase which binds promiscuously membrane-bound ephrin family ligands residing on adjacent cells, leading to contact-dependent bidirectional signaling into neighboring cells. The signaling pathway downstream of the receptor is referred to as forward signaling while the signaling pathway downstream of the ephrin ligand is referred to as reverse signaling. Highly promiscuous for ephrin-A ligands it binds preferentially efna5. Upon activation by efna5 regulates cell-cell adhesion, cytoskeletal organization and cell migration. Plays a role in cardiac cells migration and differentiation probably through activation by efna1. Involved in the retinotectal mapping of neurons. May also control the segregation but not the guidance of motor and sensory axons during neuromuscular circuit development. The chain is Ephrin type-A receptor 3 (epha3) from Danio rerio (Zebrafish).